The chain runs to 366 residues: Probable protein arginine N-methyltransferase 1.2 (366 aa).

Residues Ala45–Ser347 form the SAM-dependent MTase PRMT-type domain. Active-site residues include Glu157 and Glu166.

It belongs to the class I-like SAM-binding methyltransferase superfamily. Protein arginine N-methyltransferase family. Interacts with FIB2 and PRMT11.

Its subcellular location is the nucleus. It localises to the cytoplasm. Functionally, methylates (mono and asymmetric dimethylation) the guanidino nitrogens of arginyl residues present in a glycine and arginine-rich domain. Type I arginine methyltransferase active on both histones and non-histone proteins. Mediates the methylation of MED36A. The polypeptide is Probable protein arginine N-methyltransferase 1.2 (PRMT12) (Arabidopsis thaliana (Mouse-ear cress)).